The chain runs to 433 residues: Alpha-(1,3)-fucosyltransferase 4 (433 aa).

The interval 1–20 is disordered; the sequence is MAPAGRKLQHESRCRPSRPV. Residues 1–54 are Cytoplasmic-facing; sequence MAPAGRKLQHESRCRPSRPVDAWRAAATTRGRCMGTPGARRTARRGGWGLPRTS. The helical; Signal-anchor for type II membrane protein transmembrane segment at 55–74 threads the bilayer; sequence SGLAAAGLLCTALTACLCWG. Topologically, residues 75–433 are lumenal; the sequence is QLPPLPWASP…IHNLADWFQR (359 aa). 2 N-linked (GlcNAc...) asparagine glycosylation sites follow: N117 and N218.

It belongs to the glycosyltransferase 10 family. In terms of tissue distribution, in adult, highest expression in spleen, testis, brain, lung, kidney and skeletal muscle and to a lesser extent in liver and heart.

The protein localises to the golgi apparatus. Its subcellular location is the golgi stack membrane. It catalyses the reaction a beta-D-galactosyl-(1-&gt;4)-N-acetyl-beta-D-glucosaminyl derivative + GDP-beta-L-fucose = a beta-D-galactosyl-(1-&gt;4)-[alpha-L-fucosyl-(1-&gt;3)]-N-acetyl-beta-D-glucosaminyl derivative + GDP + H(+). It carries out the reaction an N-acetyl-alpha-neuraminyl-(2-&gt;3)-beta-D-galactosyl-(1-&gt;4)-N-acetyl-beta-D-glucosaminyl derivative + GDP-beta-L-fucose = an alpha-Neu5Ac-(2-&gt;3)-beta-D-Gal-(1-&gt;4)-[alpha-L-Fuc-(1-&gt;3)]-beta-D-GlcNAc derivative + GDP + H(+). The catalysed reaction is an alpha-Neu5Ac-(2-&gt;3)-beta-D-Gal-(1-&gt;4)-beta-D-GlcNAc-(1-&gt;3)-beta-D-Gal-(1-&gt;4)-beta-D-GlcNAc derivative + GDP-beta-L-fucose = an alpha-Neu5Ac-(2-&gt;3)-beta-D-Gal-(1-&gt;4)-beta-D-GlcNAc-(1-&gt;3)-beta-D-Gal-(1-&gt;4)-[alpha-L-Fuc-(1-&gt;3)]-beta-D-GlcNAc derivative + GDP + H(+). The enzyme catalyses an alpha-Neu5Ac-(2-&gt;3)-beta-D-Gal-(1-&gt;4)-beta-D-GlcNAc6S derivative + GDP-beta-L-fucose = an alpha-Neu5Ac-(2-&gt;3)-beta-D-Gal-(1-&gt;4)-[alpha-L-Fuc-(1-&gt;3)]-beta-D-GlcNAc6S derivative + GDP + H(+). Its pathway is protein modification; protein glycosylation. In terms of biological role, catalyzes alpha(1-&gt;3) linkage of fucosyl moiety transferred from GDP-beta-L-fucose to N-acetyl glucosamine (GlcNAc) within type 2 lactosamine (LacNAc, Gal-beta(1-&gt;4)GlcNAc) glycan attached to N- or O-linked glycoproteins. Robustly fucosylates nonsialylated distal LacNAc unit of the polylactosamine chain to form Lewis X antigen (CD15), a glycan determinant known to mediate important cellular functions in development and immunity. Fucosylates with lower efficiency sialylated LacNAc acceptors to form sialyl Lewis X and 6-sulfo sialyl Lewis X determinants that serve as recognition epitopes for C-type lectins. Together with FUT7 contributes to SELE, SELL and SELP selectin ligand biosynthesis and selectin-dependent lymphocyte homing, leukocyte migration and blood leukocyte homeostasis. In a cell type specific manner, may also fucosylate the internal LacNAc unit of the polylactosamine chain to form VIM-2 antigen that serves as recognition epitope for SELE. In Rattus norvegicus (Rat), this protein is Alpha-(1,3)-fucosyltransferase 4 (Fut4).